We begin with the raw amino-acid sequence, 231 residues long: Orotate phosphoribosyltransferase (231 aa).

Residues Lys27, 79–80 (YK), Arg106, Lys107, Lys110, His112, and 133–141 (DDVMTAGTA) contribute to the 5-phospho-alpha-D-ribose 1-diphosphate site. 2 residues coordinate orotate: Thr137 and Arg166.

Belongs to the purine/pyrimidine phosphoribosyltransferase family. PyrE subfamily. As to quaternary structure, homodimer. Mg(2+) is required as a cofactor.

The catalysed reaction is orotidine 5'-phosphate + diphosphate = orotate + 5-phospho-alpha-D-ribose 1-diphosphate. It functions in the pathway pyrimidine metabolism; UMP biosynthesis via de novo pathway; UMP from orotate: step 1/2. In terms of biological role, catalyzes the transfer of a ribosyl phosphate group from 5-phosphoribose 1-diphosphate to orotate, leading to the formation of orotidine monophosphate (OMP). This is Orotate phosphoribosyltransferase from Bifidobacterium longum (strain NCC 2705).